A 265-amino-acid polypeptide reads, in one-letter code: MIESQRHSYHLVDPSPWPISGSLGALATTVGGVMYMHSFQGGATLLSLGLIFILYTMFVWWRDVLRESTLEGHHTKVVQLGPRYGSIPFIVSEVMFLFAFFWASSHSSLAPTVEIGGIWPPLGIWVLDPWEIPFLNTPILLSSGAAVTWAHHAILAGKEKRAVYALVATVSLALVFTGFQGMEYYQAPFTISDSIYGSTFFLATGFHGFHVIIGTLFLIICGIRQYLGHLTKEHHVGFEAAAWYWHFVDVVWLFLFVSIYWWGGI.

A run of 8 helical transmembrane segments spans residues Pro16 to Met36, Gly41 to Trp61, Tyr84 to Ser104, Ile115 to Leu135, Thr137 to Gly157, Ala162 to Met182, Phe200 to Ile220, and Trp245 to Ile265.

Belongs to the cytochrome c oxidase subunit 3 family. As to quaternary structure, component of the cytochrome c oxidase (complex IV, CIV), a multisubunit enzyme composed of a catalytic core of 3 subunits and several supernumerary subunits. The complex exists as a monomer or a dimer and forms supercomplexes (SCs) in the inner mitochondrial membrane with ubiquinol-cytochrome c oxidoreductase (cytochrome b-c1 complex, complex III, CIII).

It is found in the mitochondrion inner membrane. The catalysed reaction is 4 Fe(II)-[cytochrome c] + O2 + 8 H(+)(in) = 4 Fe(III)-[cytochrome c] + 2 H2O + 4 H(+)(out). Functionally, component of the cytochrome c oxidase, the last enzyme in the mitochondrial electron transport chain which drives oxidative phosphorylation. The respiratory chain contains 3 multisubunit complexes succinate dehydrogenase (complex II, CII), ubiquinol-cytochrome c oxidoreductase (cytochrome b-c1 complex, complex III, CIII) and cytochrome c oxidase (complex IV, CIV), that cooperate to transfer electrons derived from NADH and succinate to molecular oxygen, creating an electrochemical gradient over the inner membrane that drives transmembrane transport and the ATP synthase. Cytochrome c oxidase is the component of the respiratory chain that catalyzes the reduction of oxygen to water. Electrons originating from reduced cytochrome c in the intermembrane space (IMS) are transferred via the dinuclear copper A center (CU(A)) of subunit 2 and heme A of subunit 1 to the active site in subunit 1, a binuclear center (BNC) formed by heme A3 and copper B (CU(B)). The BNC reduces molecular oxygen to 2 water molecules using 4 electrons from cytochrome c in the IMS and 4 protons from the mitochondrial matrix. This chain is Cytochrome c oxidase subunit 3 (COX3), found in Glycine max (Soybean).